We begin with the raw amino-acid sequence, 397 residues long: Golgi-associated RAB2 interactor protein 2 (397 aa).

Disordered regions lie at residues 1-24 (MKKS…PDSK) and 342-397 (QTTL…KLLN). 3 stretches are compositionally biased toward basic and acidic residues: residues 10–24 (TRID…PDSK), 353–369 (EKSK…RTMD), and 376–397 (KAEE…KLLN).

This sequence belongs to the GARIN family. As to quaternary structure, interacts with CALM1.

Its subcellular location is the cell projection. It localises to the cilium. It is found in the flagellum. Functionally, seems to play a role in sperm motility. This is Golgi-associated RAB2 interactor protein 2 (GARIN2) from Bos taurus (Bovine).